The following is a 768-amino-acid chain: Cullin-3-A (768 aa).

Residues 677-698 (VAAKQGESDPERKETRQKVDDD) form a disordered region. Over residues 682–698 (GESDPERKETRQKVDDD) the composition is skewed to basic and acidic residues. In terms of domain architecture, Cullin neddylation spans 698-760 (DRKHEIEAAI…REYLARTPED (63 aa)). Residue Lys-712 forms a Glycyl lysine isopeptide (Lys-Gly) (interchain with G-Cter in NEDD8) linkage.

This sequence belongs to the cullin family. In terms of assembly, component of multiple BCR (BTB-CUL3-RBX1) E3 ubiquitin-protein ligase complexes formed of cul3, rbx1 and a variable BTB domain-containing protein acting as both, adapter to cullin and substrate recognition subunit. Interacts with btbd6. Neddylated. Attachment of NEDD8 is required for the E3 ubiquitin-protein ligase activity of the SCF-like complex.

The protein resides in the nucleus. It participates in protein modification; protein ubiquitination. Its function is as follows. Probable core component of cullin-based SCF-like E3 ubiquitin-protein ligase complexes which mediate the ubiquitination and subsequent proteasomal degradation of target proteins. The E3 ubiquitin-protein ligase activity of the complex is dependent on the neddylation of the cullin subunit. Involved in ER-Golgi transport by regulating the size of COPII coats, thereby playing a key role in collagen export, which is required for embryonic stem (ES) cells division. May play a role in the regulation of mittotic entry via ubiquitination of aurka. The chain is Cullin-3-A (cul3a) from Xenopus laevis (African clawed frog).